Consider the following 116-residue polypeptide: NADH-ubiquinone oxidoreductase chain 3 (116 aa).

The next 3 helical transmembrane spans lie at 3–23 (LITT…TISF), 56–76 (FFLI…LLPL), and 87–107 (LTLI…IYEW).

Belongs to the complex I subunit 3 family.

The protein localises to the mitochondrion membrane. It carries out the reaction a ubiquinone + NADH + 5 H(+)(in) = a ubiquinol + NAD(+) + 4 H(+)(out). In terms of biological role, core subunit of the mitochondrial membrane respiratory chain NADH dehydrogenase (Complex I) that is believed to belong to the minimal assembly required for catalysis. Complex I functions in the transfer of electrons from NADH to the respiratory chain. The immediate electron acceptor for the enzyme is believed to be ubiquinone. This is NADH-ubiquinone oxidoreductase chain 3 (MT-ND3) from Oncorhynchus gorbuscha (Pink salmon).